A 424-amino-acid chain; its full sequence is Cytoplasmic tRNA 2-thiolation protein 2 (424 aa).

Residues 357–385 (PAAPETEEEEELSKKAHMEKSQEKTGDAD) are disordered. A compositionally biased stretch (basic and acidic residues) spans 368-385 (LSKKAHMEKSQEKTGDAD).

The protein belongs to the CTU2/NCS2 family.

The protein resides in the cytoplasm. It participates in tRNA modification; 5-methoxycarbonylmethyl-2-thiouridine-tRNA biosynthesis. Its function is as follows. Plays a central role in 2-thiolation of mcm(5)S(2)U at tRNA wobble positions of tRNA(Lys), tRNA(Glu) and tRNA(Gln). May act by forming a heterodimer with NCS6 that ligates sulfur from thiocarboxylated URM1 onto the uridine of tRNAs at wobble position. Prior mcm(5) tRNA modification by the elongator complex is required for 2-thiolation. May also be involved in protein urmylation. This chain is Cytoplasmic tRNA 2-thiolation protein 2, found in Yarrowia lipolytica (strain CLIB 122 / E 150) (Yeast).